A 346-amino-acid polypeptide reads, in one-letter code: Nicotinate-nucleotide--dimethylbenzimidazole phosphoribosyltransferase (346 aa).

The Proton acceptor role is filled by Glu312.

Belongs to the CobT family.

It carries out the reaction 5,6-dimethylbenzimidazole + nicotinate beta-D-ribonucleotide = alpha-ribazole 5'-phosphate + nicotinate + H(+). It functions in the pathway nucleoside biosynthesis; alpha-ribazole biosynthesis; alpha-ribazole from 5,6-dimethylbenzimidazole: step 1/2. In terms of biological role, catalyzes the synthesis of alpha-ribazole-5'-phosphate from nicotinate mononucleotide (NAMN) and 5,6-dimethylbenzimidazole (DMB). This chain is Nicotinate-nucleotide--dimethylbenzimidazole phosphoribosyltransferase, found in Cupriavidus necator (strain ATCC 17699 / DSM 428 / KCTC 22496 / NCIMB 10442 / H16 / Stanier 337) (Ralstonia eutropha).